A 250-amino-acid chain; its full sequence is Coproheme decarboxylase (250 aa).

Residues Arg-131, 145-149 (YPMNK), His-172, and Gln-185 each bind Fe-coproporphyrin III. Residue Tyr-145 is part of the active site.

The protein belongs to the ChdC family. Type 1 subfamily. Fe-coproporphyrin III serves as cofactor.

The enzyme catalyses Fe-coproporphyrin III + 2 H2O2 + 2 H(+) = heme b + 2 CO2 + 4 H2O. It carries out the reaction Fe-coproporphyrin III + H2O2 + H(+) = harderoheme III + CO2 + 2 H2O. It catalyses the reaction harderoheme III + H2O2 + H(+) = heme b + CO2 + 2 H2O. The protein operates within porphyrin-containing compound metabolism; protoheme biosynthesis. Its function is as follows. Involved in coproporphyrin-dependent heme b biosynthesis. Catalyzes the decarboxylation of Fe-coproporphyrin III (coproheme) to heme b (protoheme IX), the last step of the pathway. The reaction occurs in a stepwise manner with a three-propionate intermediate. The sequence is that of Coproheme decarboxylase from Staphylococcus aureus (strain Mu50 / ATCC 700699).